A 594-amino-acid polypeptide reads, in one-letter code: Aspartate--tRNA ligase (594 aa).

Glu-171 contributes to the L-aspartate binding site. Positions 195 to 198 are aspartate; it reads QLFK. Arg-217 provides a ligand contact to L-aspartate. ATP contacts are provided by residues 217-219 and Gln-226; that span reads RDE. An L-aspartate-binding site is contributed by His-449. Glu-483 contacts ATP. Arg-490 is a binding site for L-aspartate. 535-538 lines the ATP pocket; it reads GLDR.

This sequence belongs to the class-II aminoacyl-tRNA synthetase family. Type 1 subfamily. Homodimer.

The protein resides in the cytoplasm. It catalyses the reaction tRNA(Asp) + L-aspartate + ATP = L-aspartyl-tRNA(Asp) + AMP + diphosphate. Catalyzes the attachment of L-aspartate to tRNA(Asp) in a two-step reaction: L-aspartate is first activated by ATP to form Asp-AMP and then transferred to the acceptor end of tRNA(Asp). The chain is Aspartate--tRNA ligase from Proteus mirabilis (strain HI4320).